The following is a 301-amino-acid chain: 4-hydroxy-tetrahydrodipicolinate synthase (301 aa).

Threonine 46 contacts pyruvate. The active-site Proton donor/acceptor is tyrosine 134. The active-site Schiff-base intermediate with substrate is lysine 162. Position 203 (isoleucine 203) interacts with pyruvate.

The protein belongs to the DapA family. As to quaternary structure, homotetramer; dimer of dimers.

Its subcellular location is the cytoplasm. It catalyses the reaction L-aspartate 4-semialdehyde + pyruvate = (2S,4S)-4-hydroxy-2,3,4,5-tetrahydrodipicolinate + H2O + H(+). Its pathway is amino-acid biosynthesis; L-lysine biosynthesis via DAP pathway; (S)-tetrahydrodipicolinate from L-aspartate: step 3/4. Catalyzes the condensation of (S)-aspartate-beta-semialdehyde [(S)-ASA] and pyruvate to 4-hydroxy-tetrahydrodipicolinate (HTPA). In Anaplasma marginale (strain Florida), this protein is 4-hydroxy-tetrahydrodipicolinate synthase.